A 171-amino-acid chain; its full sequence is Small ribosomal subunit protein bS16 (171 aa).

The disordered stretch occupies residues 114–171 (EGGPTTEAAKPKKKAATSGAKKAAKAAEPEAAASEAAEPEAAAAPAEGGEQAESSAES). Residues 142–171 (PEAAASEAAEPEAAAAPAEGGEQAESSAES) show a composition bias toward low complexity.

Belongs to the bacterial ribosomal protein bS16 family.

The sequence is that of Small ribosomal subunit protein bS16 from Mycolicibacterium paratuberculosis (strain ATCC BAA-968 / K-10) (Mycobacterium paratuberculosis).